Reading from the N-terminus, the 209-residue chain is dITP/XTP pyrophosphatase (209 aa).

7 to 12 (SSHGYK) is a substrate binding site. Residue Asp70 is the Proton acceptor of the active site. Mg(2+) is bound at residue Asp70. Substrate contacts are provided by residues Ser71, 154-157 (FGYD), Lys177, and 182-183 (HR).

It belongs to the HAM1 NTPase family. As to quaternary structure, homodimer. The cofactor is Mg(2+).

The enzyme catalyses XTP + H2O = XMP + diphosphate + H(+). The catalysed reaction is dITP + H2O = dIMP + diphosphate + H(+). It carries out the reaction ITP + H2O = IMP + diphosphate + H(+). Pyrophosphatase that catalyzes the hydrolysis of nucleoside triphosphates to their monophosphate derivatives, with a high preference for the non-canonical purine nucleotides XTP (xanthosine triphosphate), dITP (deoxyinosine triphosphate) and ITP. Seems to function as a house-cleaning enzyme that removes non-canonical purine nucleotides from the nucleotide pool, thus preventing their incorporation into DNA/RNA and avoiding chromosomal lesions. This is dITP/XTP pyrophosphatase from Chlamydia trachomatis serovar A (strain ATCC VR-571B / DSM 19440 / HAR-13).